A 585-amino-acid chain; its full sequence is uncharacterized protein (585 aa).

To E.coli YejM.

This is an uncharacterized protein from Haemophilus influenzae (strain ATCC 51907 / DSM 11121 / KW20 / Rd).